The primary structure comprises 143 residues: NADH-quinone oxidoreductase subunit A (143 aa).

3 helical membrane-spanning segments follow: residues 12–32, 61–81, and 90–110; these read YIVG…FLGG, FYLI…LYIW, and WIGF…LIYA.

Belongs to the complex I subunit 3 family. In terms of assembly, NDH-1 is composed of 13 different subunits. Subunits NuoA, H, J, K, L, M, N constitute the membrane sector of the complex.

The protein resides in the cell inner membrane. The catalysed reaction is a quinone + NADH + 5 H(+)(in) = a quinol + NAD(+) + 4 H(+)(out). In terms of biological role, NDH-1 shuttles electrons from NADH, via FMN and iron-sulfur (Fe-S) centers, to quinones in the respiratory chain. The immediate electron acceptor for the enzyme in this species is believed to be ubiquinone. Couples the redox reaction to proton translocation (for every two electrons transferred, four hydrogen ions are translocated across the cytoplasmic membrane), and thus conserves the redox energy in a proton gradient. In Blochmanniella floridana, this protein is NADH-quinone oxidoreductase subunit A.